Consider the following 498-residue polypeptide: Diacylglycerol O-acyltransferase 1A (498 aa).

The interval 1 to 67 (MAISDEPETV…ANSQPQQKQD (67 aa)) is disordered. The next 7 membrane-spanning stretches (helical) occupy residues 102–122 (HAGL…RLII), 146–166 (WPLF…FIVE), 178–198 (VVVV…VLVI), 203–223 (SAFL…LKLV), 253–273 (YPYN…TLCY), 295–315 (LIIF…PIVQ), and 342–362 (VWLC…AELL). An FYXDWWN motif motif is present at residues 369-375 (FYQDWWN). 3 consecutive transmembrane segments (helical) span residues 410–430 (AVAL…CIAV), 432–452 (CHIF…LVFI), and 465–485 (VGNM…CVLL). H424 is a catalytic residue.

The protein belongs to the membrane-bound acyltransferase family. Sterol o-acyltransferase subfamily. As to expression, highly expressed in flowers and pods. Expressed at low levels in roots, stems and leaves.

Its subcellular location is the endoplasmic reticulum membrane. It carries out the reaction an acyl-CoA + a 1,2-diacyl-sn-glycerol = a triacyl-sn-glycerol + CoA. It participates in glycerolipid metabolism; triacylglycerol biosynthesis. Its function is as follows. Major contributor to triacylglycerol (TAG) synthesis and oil accumulation in developing seeds. Catalyzes the acylation of the sn-3 hydroxy group of sn-1,2-diacylglycerol using acyl-CoA. Has a marked preference for oleoyl-CoA (18:1) and sn-1,2-dioleoylglycerol over vernoloyl-CoA and sn-1,2-divernoloylglycerol. Can use oleoyl-CoA, linoleoyl-CoA and linolenoyl-CoA as substrates. The chain is Diacylglycerol O-acyltransferase 1A from Glycine max (Soybean).